The chain runs to 78 residues: Small ribosomal subunit protein bS16c (78 aa).

It belongs to the bacterial ribosomal protein bS16 family.

The protein localises to the plastid. It localises to the chloroplast. This chain is Small ribosomal subunit protein bS16c, found in Panax ginseng (Korean ginseng).